The chain runs to 577 residues: Adenine deaminase (577 aa).

This sequence belongs to the metallo-dependent hydrolases superfamily. Adenine deaminase family. Mn(2+) serves as cofactor.

It catalyses the reaction adenine + H2O + H(+) = hypoxanthine + NH4(+). The protein is Adenine deaminase of Bacillus velezensis (strain DSM 23117 / BGSC 10A6 / LMG 26770 / FZB42) (Bacillus amyloliquefaciens subsp. plantarum).